A 149-amino-acid chain; its full sequence is MMLPQGYTFRKLKLTDYDNQYLETLKVLTTVGEISKEDFTELYNHWSSLPSIYHPYVITNASGIVVATGMLFVEKKLIHECGKVGHIEDISVAKSEQGKKLGYYLVTSLTKVAQENDCYKVILDCSPENVGFYEKCGYKDGGVEMVCRF.

In terms of domain architecture, N-acetyltransferase spans 7–149; that stretch reads YTFRKLKLTD…DGGVEMVCRF (143 aa). Substrate-binding positions include threonine 29, 76–79, and 88–90; these read KLIH and EDI. Residues 90 to 92 and 98 to 103 contribute to the acetyl-CoA site; these read ISV and GKKLGY. Substrate contacts are provided by residues 119-120 and aspartate 124; that span reads YK. Acetyl-CoA is bound at residue 133 to 135; sequence YEK. Arginine 148 serves as a coordination point for substrate.

This sequence belongs to the acetyltransferase family. GNA1 subfamily.

It catalyses the reaction D-glucosamine 6-phosphate + acetyl-CoA = N-acetyl-D-glucosamine 6-phosphate + CoA + H(+). The protein operates within nucleotide-sugar biosynthesis; UDP-N-acetyl-alpha-D-glucosamine biosynthesis; N-acetyl-alpha-D-glucosamine 1-phosphate from alpha-D-glucosamine 6-phosphate (route I): step 1/2. This Candida albicans (Yeast) protein is Glucosamine 6-phosphate N-acetyltransferase (GNA1).